A 427-amino-acid chain; its full sequence is Serine hydroxymethyltransferase (427 aa).

(6S)-5,6,7,8-tetrahydrofolate is bound by residues Leu122 and 126-128; that span reads GHL. At Lys231 the chain carries N6-(pyridoxal phosphate)lysine. Residues Glu247 and 355–357 contribute to the (6S)-5,6,7,8-tetrahydrofolate site; that span reads SPF.

The protein belongs to the SHMT family. In terms of assembly, homodimer. Pyridoxal 5'-phosphate is required as a cofactor.

It is found in the cytoplasm. It catalyses the reaction (6R)-5,10-methylene-5,6,7,8-tetrahydrofolate + glycine + H2O = (6S)-5,6,7,8-tetrahydrofolate + L-serine. It participates in one-carbon metabolism; tetrahydrofolate interconversion. It functions in the pathway amino-acid biosynthesis; glycine biosynthesis; glycine from L-serine: step 1/1. Functionally, catalyzes the reversible interconversion of serine and glycine with tetrahydrofolate (THF) serving as the one-carbon carrier. This reaction serves as the major source of one-carbon groups required for the biosynthesis of purines, thymidylate, methionine, and other important biomolecules. Also exhibits THF-independent aldolase activity toward beta-hydroxyamino acids, producing glycine and aldehydes, via a retro-aldol mechanism. The sequence is that of Serine hydroxymethyltransferase from Crocosphaera subtropica (strain ATCC 51142 / BH68) (Cyanothece sp. (strain ATCC 51142)).